The following is a 426-amino-acid chain: DNA polymerase processivity factor component OPG148 (426 aa).

Belongs to the orthopoxvirus OPG148 family. As to quaternary structure, interacts with the DNA polymerase catalytic subunit OPG071. Interacts with UDG/OPG116. Component of the uracil-DNA glycosylase(UDG)-OPG148-polymerase complex; OPG148 and UDG form a heterodimeric processivity factor that associates with OPG071 to form the processive polymerase holoenzyme. Interacts with OPG117.

Its function is as follows. Plays an essential role in viral DNA replication by acting as the polymerase processivity factor together with protein OPG116. Serves as a bridge which links the DNA polymerase OPG071 and the uracil DNA glycosylase. This is DNA polymerase processivity factor component OPG148 (OPG148) from Cynomys gunnisoni (Gunnison's prairie dog).